A 980-amino-acid polypeptide reads, in one-letter code: Exportin-T (980 aa).

Belongs to the exportin family. In terms of tissue distribution, expressed in roots, stems, leaves, flowers and embryos.

Its subcellular location is the nucleus. The protein resides in the cytoplasm. Its function is as follows. Probable tRNA nucleus export receptor which regulates tRNA processing and facilitates tRNA translocation across the nuclear pore complex. Is required for correct leaf initiation at different developmental stages and may play a role in floral patterning. The polypeptide is Exportin-T (Oryza sativa subsp. japonica (Rice)).